The primary structure comprises 1816 residues: Kinesin-like protein KIF1B (1816 aa).

Serine 2 carries the N-acetylserine modification. A Kinesin motor domain is found at 5 to 354 (SVKVAVRVRP…LRYADRAKQI (350 aa)). 97–104 (GQTGAGKS) is a binding site for ATP. The segment at 270–350 (NINKSLTTLG…TLSTLRYADR (81 aa)) is interaction with KIFBP. Residues 365–386 (NAKLVRELKEEVTRLKDLLRAQ) are a coiled coil. Residues 431 to 450 (FSTASMGSLTSSPSSCSLSS) are disordered. The segment covering 432–450 (STASMGSLTSSPSSCSLSS) has biased composition (low complexity). A coiled-coil region spans residues 470-502 (GEEAIERLKESEKIIAELNETWEEKLRKTEAIR). The FHA domain occupies 556–612 (TRVGQADAERRQDIVLSGAHIKEEHCIFRSERSNSGEVIVTLEPCERSETYVNGKRV). Residues threonine 647 and threonine 652 each carry the phosphothreonine modification. Phosphoserine occurs at positions 663 and 665. 2 coiled-coil regions span residues 668–737 (EKQG…EEEV) and 841–869 (SLEKLKQRLDLMREMYDRAGEMASSAQDE). Residues serine 1054 and serine 1057 each carry the phosphoserine modification. The residue at position 1075 (threonine 1075) is a Phosphothreonine. Phosphoserine occurs at positions 1141, 1416, 1454, and 1487. The segment at 1550–1570 (STTTFESAITPSESSGYDSGD) is disordered. The span at 1554 to 1566 (FESAITPSESSGY) shows a compositional bias: polar residues. Phosphoserine occurs at positions 1573, 1603, 1610, and 1613. Residues 1617 to 1660 (RDPSESSFSSATLTPSSTCPSLVDSRSNSLDQKTPEANSRASSP) are disordered. The span at 1621–1634 (ESSFSSATLTPSST) shows a compositional bias: low complexity. Polar residues predominate over residues 1640–1658 (DSRSNSLDQKTPEANSRAS). Positions 1702–1799 (VSKKGYLHFK…WLYAFNPLLA (98 aa)) constitute a PH domain.

It belongs to the TRAFAC class myosin-kinesin ATPase superfamily. Kinesin family. Unc-104 subfamily. As to quaternary structure, monomer. Interacts with KIFBP; positively regulates KIF1B microtubule motor activity. Interacts (via C-terminus end of the kinesin-motor domain) with CHP1; the interaction occurs in a calcium-dependent manner. Interacts with MADD (via death domain); links this isoform to Rab3-carrying vesicles in anterograde synaptic vesicle transport. As to expression, isoform 3 is abundant in the skeletal muscle. It is also expressed in fetal brain, lung and kidney, and adult heart, placenta, testis, ovary and small intestine. Isoform 2 is abundant in the brain and also expressed in fetal heart, lung, liver and kidney, and adult skeletal muscle, placenta, liver, kidney, heart, spleen, thymus, prostate, testis, ovary, small intestine, colon and pancreas.

It is found in the cytoplasm. The protein resides in the cytoskeleton. Its subcellular location is the cytoplasmic vesicle. The protein localises to the secretory vesicle. It localises to the synaptic vesicle membrane. It is found in the mitochondrion. The catalysed reaction is ATP + H2O + a kinesin associated with a microtubule at position (n) = ADP + phosphate a kinesin associated with a microtubule at position (n+1, toward the plus end).. Has a plus-end-directed microtubule motor activity and functions as a motor for transport of vesicles and organelles along microtubules. Its function is as follows. Has a plus-end-directed microtubule motor activity and functions as a motor for anterograde synaptic vesicle transport along axonal microtubules from the cell body to the presynapse in neuronal cells. Functions as a downstream effector in a developmental apoptotic pathway that is activated when nerve growth factor (NGF) becomes limiting for neuronal progenitor cells. In terms of biological role, has a plus-end-directed microtubule motor activity and functions as a motor for anterograde transport of mitochondria. In Homo sapiens (Human), this protein is Kinesin-like protein KIF1B.